The primary structure comprises 358 residues: Arginine kinase (358 aa).

Positions 2-84 (SDADLFSKLD…LDEVIKDYHK (83 aa)) constitute a Phosphagen kinase N-terminal domain. 57-61 (GVGIY) contacts substrate. The Phosphagen kinase C-terminal domain occupies 112 to 350 (FIVSTRVRVG…EEILKREKEL (239 aa)). ATP contacts are provided by residues 115–119 (STRVR) and histidine 178. Glutamate 218 is a substrate binding site. Arginine 222 provides a ligand contact to ATP. Substrate is bound at residue cysteine 265. Residues 274 to 278 (RASVH) and 303 to 308 (RGIHGE) each bind ATP. Glutamate 308 is a substrate binding site.

It belongs to the ATP:guanido phosphotransferase family.

It catalyses the reaction L-arginine + ATP = N(omega)-phospho-L-arginine + ADP + H(+). The sequence is that of Arginine kinase from Turbo cornutus (Horned turban).